The sequence spans 288 residues: Translocon-associated protein subunit alpha (288 aa).

The signal sequence occupies residues 1-28; sequence MFNFGSKILVLFLVAFPCGLISFGRVSA. The Lumenal segment spans residues 29-208; it reads DSESAEDIFP…ELEEGLDGET (180 aa). A disordered region spans residues 34–69; sequence EDIFPDSTVDEEEEEEEDEVLVEEDQVPGSETEDDI. Residues N137 and N192 are each glycosylated (N-linked (GlcNAc...) asparagine). Residues 209–229 traverse the membrane as a helical segment; that stretch reads IFMYIFLTGLVVLAVFGMYQV. Over 230-288 the chain is Cytoplasmic; the sequence is LESRTRKRFPVKVETGTGGMNGVDISWIPQETLNIMSKASASPKASPRKRTKRAVGVDQ. The segment at 267–288 is disordered; sequence KASASPKASPRKRTKRAVGVDQ.

The protein belongs to the TRAP-alpha family. In terms of assembly, heterotetramer of TRAP-alpha, TRAP-beta, TRAP-delta and TRAP-gamma. Phosphorylated in its cytoplasmic tail.

The protein resides in the endoplasmic reticulum membrane. In terms of biological role, TRAP proteins are part of a complex whose function is to bind calcium to the ER membrane and thereby regulate the retention of ER resident proteins. May be involved in the recycling of the translocation apparatus after completion of the translocation process or may function as a membrane-bound chaperone facilitating folding of translocated proteins. This is Translocon-associated protein subunit alpha (ssr1) from Oncorhynchus mykiss (Rainbow trout).